The primary structure comprises 752 residues: Iron-sulfur clusters transporter ABCB7, mitochondrial (752 aa).

Residues 1-22 (MALLAIHSWRWAAAAVAFEKHK) constitute a mitochondrion transit peptide. The Mitochondrial matrix segment spans residues 23–140 (HSAVLTRSLV…KDRPDLRARV (118 aa)). Positions 140–436 (VAISLGFLGG…LGTVYRETRQ (297 aa)) constitute an ABC transmembrane type-1 domain. A helical membrane pass occupies residues 141-161 (AISLGFLGGAKAMNIVVPFMF). At 162-185 (KYAVDSLNQMSGNMLNLSDAPNTV) the chain is on the mitochondrial intermembrane side. The helical transmembrane segment at 186 to 206 (ATMATAVLIGYGVSRAGAAFF) threads the bilayer. Over 207–259 (NEVRNAVFGKVAQNSIRRIAKNVFLHLHNLDLGFHLSRQTGALSKAIDRGTRG) the chain is Mitochondrial matrix. N6-acetyllysine is present on residues lysine 216 and lysine 251. The helical transmembrane segment at 260 to 280 (ISFVLSALVFNLLPIVFEMTL) threads the bilayer. Topologically, residues 281–290 (VSSVLYYKCG) are mitochondrial intermembrane. The chain crosses the membrane as a helical span at residues 291-311 (AQFALVTLGTLGAYTAFTVAV). Over 312-382 (TRWRTRFRIE…TLAMLNFGQS (71 aa)) the chain is Mitochondrial matrix. 315 to 319 (RTRFR) contacts glutathione. Serine 336 bears the Phosphoserine mark. A Phosphotyrosine modification is found at tyrosine 340. The residue at position 342 (threonine 342) is a Phosphothreonine. Lysine 350 bears the N6-acetyllysine mark. 378–381 (NFGQ) contributes to the glutathione binding site. A helical transmembrane segment spans residues 383-403 (AIFSVGLTAIMVLASQGIVAG). At 404 to 409 (ALTVGD) the chain is on the mitochondrial intermembrane side. The helical transmembrane segment at 410-430 (LVMVNGLLFQLSLPLNFLGTV) threads the bilayer. Glutathione is bound at residue glycine 428. Topologically, residues 431 to 752 (YRETRQALID…SVKGCGNCSC (322 aa)) are mitochondrial matrix. Positions 472-706 (VAFDNVHFEY…SSSIYSEMWH (235 aa)) constitute an ABC transporter domain. Residues tyrosine 481 and 505-516 (GGSGSGKSTIVR) contribute to the ATP site.

This sequence belongs to the ABC transporter superfamily. ABCB family. Heavy Metal importer (TC 3.A.1.210) subfamily. Homodimer or heterodimer. Interacts with C10orf88/PAAT. Forms a complex with ABCB10 and FECH, where a dimeric FECH bridges ABCB7 and ABCB10 homodimers; this complex may be required for cellular iron homeostasis, mitochondrial function and heme biosynthesis. Interacts with FECH. Interacts with ATP5F1A. Interacts with COX4I1; this interaction allows the regulation of cellular iron homeostasis and cellular reactive oxygen species (ROS) levels in cardiomyocytes.

It is found in the mitochondrion inner membrane. The enzyme catalyses (glutathione)4[2Fe(III)-2S] cluster(in) + ATP + H2O = (glutathione)4[2Fe(III)-2S] cluster(out) + ADP + phosphate + H(+). Its function is as follows. Exports glutathione-coordinated iron-sulfur clusters such as [2Fe-2S]-(GS)4 cluster from the mitochondria to the cytosol in an ATP-dependent manner allowing the assembly of the cytosolic iron-sulfur (Fe/S) cluster-containing proteins and participates in iron homeostasis. Moreover, through a functional complex formed of ABCB7, FECH and ABCB10, also plays a role in the cellular iron homeostasis, mitochondrial function and heme biosynthesis. In cardiomyocytes, regulates cellular iron homeostasis and cellular reactive oxygen species (ROS) levels through its interaction with COX4I1. May also play a role in hematopoiesis. The protein is Iron-sulfur clusters transporter ABCB7, mitochondrial of Rattus norvegicus (Rat).